Here is a 1595-residue protein sequence, read N- to C-terminus: Pentafunctional AROM polypeptide (1595 aa).

The tract at residues 1-384 (MGVPTKISIL…HEPRASTVSN (384 aa)) is 3-dehydroquinate synthase. NAD(+) is bound by residues 44–46 (DTN), 81–84 (ESSK), 114–116 (GGV), and D119. R130 contributes to the 7-phospho-2-dehydro-3-deoxy-D-arabino-heptonate binding site. Position 139-140 (139-140 (TT)) interacts with NAD(+). Positions 146 and 152 each coordinate 7-phospho-2-dehydro-3-deoxy-D-arabino-heptonate. K161 is an NAD(+) binding site. Position 162 (N162) interacts with 7-phospho-2-dehydro-3-deoxy-D-arabino-heptonate. NAD(+) is bound by residues 179–182 (FLNT) and N190. A Zn(2+)-binding site is contributed by E194. Residues 194 to 197 (EVIK) and K250 contribute to the 7-phospho-2-dehydro-3-deoxy-D-arabino-heptonate site. E260 acts as the Proton acceptor; for 3-dehydroquinate synthase activity in catalysis. 7-phospho-2-dehydro-3-deoxy-D-arabino-heptonate contacts are provided by residues 264 to 268 (RNLLN) and H271. A Zn(2+)-binding site is contributed by H271. The active-site Proton acceptor; for 3-dehydroquinate synthase activity is the H275. Residues H287 and K356 each contribute to the 7-phospho-2-dehydro-3-deoxy-D-arabino-heptonate site. Position 287 (H287) interacts with Zn(2+). Residues 397 to 842 (VSPGVPKGLD…WDSLAQTFKV (446 aa)) form an EPSP synthase region. The active-site For EPSP synthase activity is C824. Positions 866–1057 (ASIFIIGMRG…RRKENTFFVS (192 aa)) are shikimate kinase. 872–879 (GMRGAGKT) is a binding site for ATP. The segment at 1058-1278 (LTLPDLSLAA…AAPGQLSARE (221 aa)) is 3-dehydroquinase. The active-site Proton acceptor; for 3-dehydroquinate dehydratase activity is the H1181. K1209 (schiff-base intermediate with substrate; for 3-dehydroquinate dehydratase activity) is an active-site residue. The interval 1291-1595 (AKKFAVIGNP…MGVSPSEDIL (305 aa)) is shikimate dehydrogenase.

In the N-terminal section; belongs to the sugar phosphate cyclases superfamily. Dehydroquinate synthase family. It in the 2nd section; belongs to the EPSP synthase family. The protein in the 3rd section; belongs to the shikimate kinase family. This sequence in the 4th section; belongs to the type-I 3-dehydroquinase family. In the C-terminal section; belongs to the shikimate dehydrogenase family. Homodimer. The cofactor is Zn(2+).

The protein resides in the cytoplasm. The enzyme catalyses 7-phospho-2-dehydro-3-deoxy-D-arabino-heptonate = 3-dehydroquinate + phosphate. It catalyses the reaction 3-dehydroquinate = 3-dehydroshikimate + H2O. It carries out the reaction shikimate + NADP(+) = 3-dehydroshikimate + NADPH + H(+). The catalysed reaction is shikimate + ATP = 3-phosphoshikimate + ADP + H(+). The enzyme catalyses 3-phosphoshikimate + phosphoenolpyruvate = 5-O-(1-carboxyvinyl)-3-phosphoshikimate + phosphate. It participates in metabolic intermediate biosynthesis; chorismate biosynthesis; chorismate from D-erythrose 4-phosphate and phosphoenolpyruvate: step 2/7. The protein operates within metabolic intermediate biosynthesis; chorismate biosynthesis; chorismate from D-erythrose 4-phosphate and phosphoenolpyruvate: step 3/7. Its pathway is metabolic intermediate biosynthesis; chorismate biosynthesis; chorismate from D-erythrose 4-phosphate and phosphoenolpyruvate: step 4/7. It functions in the pathway metabolic intermediate biosynthesis; chorismate biosynthesis; chorismate from D-erythrose 4-phosphate and phosphoenolpyruvate: step 5/7. It participates in metabolic intermediate biosynthesis; chorismate biosynthesis; chorismate from D-erythrose 4-phosphate and phosphoenolpyruvate: step 6/7. Its function is as follows. The AROM polypeptide catalyzes 5 consecutive enzymatic reactions in prechorismate polyaromatic amino acid biosynthesis. The polypeptide is Pentafunctional AROM polypeptide (Ajellomyces capsulatus (strain G186AR / H82 / ATCC MYA-2454 / RMSCC 2432) (Darling's disease fungus)).